Consider the following 170-residue polypeptide: Putative pre-16S rRNA nuclease (170 aa).

Residues 1-18 show a composition bias toward basic and acidic residues; that stretch reads MGTDDRLPDRPGADDPGR. The tract at residues 1–22 is disordered; that stretch reads MGTDDRLPDRPGADDPGRGRRI.

It belongs to the YqgF nuclease family.

The protein localises to the cytoplasm. Could be a nuclease involved in processing of the 5'-end of pre-16S rRNA. The polypeptide is Putative pre-16S rRNA nuclease (Mycolicibacterium smegmatis (strain ATCC 700084 / mc(2)155) (Mycobacterium smegmatis)).